The primary structure comprises 119 residues: Large ribosomal subunit protein bL20 (119 aa).

It belongs to the bacterial ribosomal protein bL20 family.

In terms of biological role, binds directly to 23S ribosomal RNA and is necessary for the in vitro assembly process of the 50S ribosomal subunit. It is not involved in the protein synthesizing functions of that subunit. The polypeptide is Large ribosomal subunit protein bL20 (Alcanivorax borkumensis (strain ATCC 700651 / DSM 11573 / NCIMB 13689 / SK2)).